The sequence spans 245 residues: Dehydrogenase/reductase SDR family member 6 (245 aa).

NAD(+) is bound by residues Q16 to I18, D37, and D58. A substrate-binding site is contributed by R144. Residue Y147 is the Proton acceptor of the active site. NAD(+)-binding positions include K151 and V180–S184. R188 and R205 together coordinate substrate.

Belongs to the short-chain dehydrogenases/reductases (SDR) family. In terms of assembly, homotetramer.

It is found in the cytoplasm. The catalysed reaction is cis-4-hydroxy-L-proline + NAD(+) = 4-oxo-L-proline + NADH + H(+). It catalyses the reaction (R)-3-hydroxybutanoate + NAD(+) = acetoacetate + NADH + H(+). The protein operates within amino-acid metabolism. It functions in the pathway siderophore biosynthesis. NAD(H)-dependent dehydrogenase/reductase with a preference for cyclic substrates. Catalyzes stereoselective conversion of 4-oxo-L-proline to cis-4-hydroxy-L-proline, likely a detoxification mechanism for ketoprolines. Mediates the formation of 2,5-dihydroxybenzoate (2,5-DHBA), a siderophore that chelates free cytoplasmic iron and associates with LCN2, thereby regulating iron transport and homeostasis while protecting cells against free radical-induced oxidative stress. The iron-siderophore complex is imported into mitochondria, providing an iron source for mitochondrial metabolic processes in particular heme synthesis. May act as a 3-hydroxybutyrate dehydrogenase. The polypeptide is Dehydrogenase/reductase SDR family member 6 (Rattus norvegicus (Rat)).